A 363-amino-acid polypeptide reads, in one-letter code: NADH-quinone oxidoreductase subunit H (363 aa).

Transmembrane regions (helical) follow at residues 29–49 (VLKI…YVVW), 62–82 (GPMY…KLLF), 96–116 (FIIA…VVPF), 127–147 (VGLL…ILAG), 163–183 (AAQV…VMIA), 202–222 (FFDW…VSGV), 239–257 (IVAG…LFFL), 264–286 (ILVS…QGWV), 299–319 (TGGW…YIWF), and 339–359 (FIPL…YGVI).

The protein belongs to the complex I subunit 1 family. As to quaternary structure, NDH-1 is composed of 14 different subunits. Subunits NuoA, H, J, K, L, M, N constitute the membrane sector of the complex.

It localises to the cell inner membrane. It catalyses the reaction a quinone + NADH + 5 H(+)(in) = a quinol + NAD(+) + 4 H(+)(out). Functionally, NDH-1 shuttles electrons from NADH, via FMN and iron-sulfur (Fe-S) centers, to quinones in the respiratory chain. The immediate electron acceptor for the enzyme in this species is believed to be ubiquinone. Couples the redox reaction to proton translocation (for every two electrons transferred, four hydrogen ions are translocated across the cytoplasmic membrane), and thus conserves the redox energy in a proton gradient. This subunit may bind ubiquinone. This chain is NADH-quinone oxidoreductase subunit H, found in Xanthomonas campestris pv. campestris (strain 8004).